Reading from the N-terminus, the 288-residue chain is Pyridoxal kinase PdxY (288 aa).

Residues serine 9 and 44 to 45 (TQ) each bind substrate. Positions 111, 148, and 181 each coordinate ATP. Aspartate 224 is a binding site for substrate.

It belongs to the pyridoxine kinase family. PdxY subfamily. In terms of assembly, homodimer. Mg(2+) is required as a cofactor.

It carries out the reaction pyridoxal + ATP = pyridoxal 5'-phosphate + ADP + H(+). It participates in cofactor metabolism; pyridoxal 5'-phosphate salvage; pyridoxal 5'-phosphate from pyridoxal: step 1/1. Functionally, pyridoxal kinase involved in the salvage pathway of pyridoxal 5'-phosphate (PLP). Catalyzes the phosphorylation of pyridoxal to PLP. This chain is Pyridoxal kinase PdxY, found in Haemophilus influenzae (strain PittEE).